Reading from the N-terminus, the 153-residue chain is Proline-rich membrane anchor 1 (153 aa).

An N-terminal signal peptide occupies residues 1–35 (MLLRDLVPRHGCCWPSLLLHCALHPLWGLVQVTHA). Topologically, residues 36 to 92 (EPQKSCSKVTDSCQHICQCRPPPPLPPPPPPPPPPRLLSAPAPNSTSCPAEDSWWSG) are extracellular. The 15-residue stretch at 56–70 (PPPPLPPPPPPPPPP) folds into the PRAD domain. Residues 59–71 (PLPPPPPPPPPPR) are compositionally biased toward pro residues. Residues 59–79 (PLPPPPPPPPPPRLLSAPAPN) form a disordered region. N79 carries an N-linked (GlcNAc...) asparagine glycan. The chain crosses the membrane as a helical span at residues 93 to 113 (LVIIVAVVCASLVFLTVLVII). The Cytoplasmic portion of the chain corresponds to 114–153 (CYKAIKRKPLRKDENGTSVAEYPMSSSQSHKGVDVNAAVV). The interval 129–153 (GTSVAEYPMSSSQSHKGVDVNAAVV) is disordered.

Interacts with ACHE, probably through disulfide bonds. Predominantly expressed in the central nervous system, including in the brain. Also expressed in muscle, heart and kidney. Isoform 1 may be predominant in the cortex and striatum, while isoform 2 is more abundant in the cerebellum.

Its subcellular location is the cell membrane. The protein resides in the cell junction. The protein localises to the synapse. Functionally, required to anchor acetylcholinesterase (ACHE) to the basal lamina of the neuromuscular junction and to the membrane of neuronal synapses in brain. Also able to organize ACHE into tetramers. The protein is Proline-rich membrane anchor 1 (Prima1) of Mus musculus (Mouse).